Here is an 836-residue protein sequence, read N- to C-terminus: Translation initiation factor IF-2 (836 aa).

Over residues 1–17 the composition is skewed to basic residues; it reads MLRLMRQKKLSIQRRTK. Disordered regions lie at residues 1-43 and 83-240; these read MLRL…RTVK and AAKK…KGAA. Over residues 18 to 27 the composition is skewed to low complexity; the sequence is TTVSSTTTGG. Residues 83 to 153 are compositionally biased toward basic and acidic residues; it reads AAKKEADEKV…AAEEAKRYAE (71 aa). Residues 154-167 show a composition bias toward acidic residues; it reads ADDSDNESSSEDYS. A compositionally biased stretch (basic residues) spans 192-202; that stretch reads RGKNKVAKAKK. Over residues 203 to 229 the composition is skewed to basic and acidic residues; sequence GGRDDENSKNSKNERESNRKNQKDAKF. Residues 335–505 form the tr-type G domain; the sequence is TRAPVVTIMG…LLQSEVLELT (171 aa). Residues 344-351 are G1; it reads GHVDHGKT. 344–351 provides a ligand contact to GTP; it reads GHVDHGKT. The tract at residues 369-373 is G2; that stretch reads GITQH. The segment at 391–394 is G3; sequence DTPG. GTP is bound by residues 391-395 and 445-448; these read DTPGH and NKID. The tract at residues 445-448 is G4; the sequence is NKID. The interval 481 to 483 is G5; that stretch reads SAK.

Belongs to the TRAFAC class translation factor GTPase superfamily. Classic translation factor GTPase family. IF-2 subfamily.

The protein localises to the cytoplasm. Its function is as follows. One of the essential components for the initiation of protein synthesis. Protects formylmethionyl-tRNA from spontaneous hydrolysis and promotes its binding to the 30S ribosomal subunits. Also involved in the hydrolysis of GTP during the formation of the 70S ribosomal complex. The chain is Translation initiation factor IF-2 from Haemophilus influenzae (strain PittEE).